The primary structure comprises 361 residues: DNA-(apurinic or apyrimidinic site) endonuclease (361 aa).

The interval 1–90 is disordered; sequence MTSRTKKLKM…TNKTTASVSI (90 aa). A compositionally biased stretch (acidic residues) spans 25–39; that stretch reads TSEEEKEEVEEEEEE. Residues 41–44 carry the Nuclear localization signal motif; sequence KKRK. Basic residues predominate over residues 43 to 64; that stretch reads RKLVKKTPAKKAPAKKAAAKKK. A compositionally biased stretch (acidic residues) spans 68–80; it reads EDEDEEEKEEEEE. Mg(2+) is bound at residue Glu-139. Tyr-211 is an active-site residue. Mg(2+) contacts are provided by Asp-252, Asn-254, and Asp-350. Asp-252 acts as the Proton donor/acceptor in catalysis.

It belongs to the DNA repair enzymes AP/ExoA family. Mg(2+) serves as cofactor. Mn(2+) is required as a cofactor.

It localises to the nucleus. This Dictyostelium discoideum (Social amoeba) protein is DNA-(apurinic or apyrimidinic site) endonuclease (apeA).